A 150-amino-acid chain; its full sequence is Transcription antitermination protein NusB (150 aa).

It belongs to the NusB family.

In terms of biological role, involved in transcription antitermination. Required for transcription of ribosomal RNA (rRNA) genes. Binds specifically to the boxA antiterminator sequence of the ribosomal RNA (rrn) operons. This is Transcription antitermination protein NusB from Saccharophagus degradans (strain 2-40 / ATCC 43961 / DSM 17024).